The primary structure comprises 399 residues: MTKKRHLFTSESVTEGHPDKICDQISDSILDAILSKDANARVACETTVTTGLVLVAGEITTSTYVDIPKIVRETIQGIGYTRAKYGFDAETCAVLTSIDEQSADIAMGVDQALEAREGQMTDAEIEAIGAGDQGLMFGFACNETQELMPLPISLAHKLARRLTEVRKNDTLSYLRPDGKTQVTVEYDENGKPVRVDTIVISTQHHPDVTWEEIDRDLKEHVIKAVVPAELIDGETKFFINPTGRFVIGGPQGDAGLTGRKIIVDTYGGYARHGGGAFSGKDATKVDRSAAYAARYVAKNIVAAGLAEKAEVQLAYAIGVAQPVSISVDTFGTGKVSEDVLVELVRNNFDLRPAGIIKMLDLRRPIYKQTAAYGHFGRTDVDLSWERTDKAVALKEQAGL.

Residue His17 coordinates ATP. Asp19 serves as a coordination point for Mg(2+). Position 45 (Glu45) interacts with K(+). Glu58 and Gln101 together coordinate L-methionine. Positions 101–111 (QSADIAMGVDQ) are flexible loop. ATP-binding positions include 177–179 (DGK), 244–245 (RF), Asp253, 259–260 (RK), Ala276, and Lys280. Residue Asp253 coordinates L-methionine. Lys284 serves as a coordination point for L-methionine.

The protein belongs to the AdoMet synthase family. In terms of assembly, homotetramer; dimer of dimers. Mg(2+) serves as cofactor. It depends on K(+) as a cofactor.

It is found in the cytoplasm. It carries out the reaction L-methionine + ATP + H2O = S-adenosyl-L-methionine + phosphate + diphosphate. It functions in the pathway amino-acid biosynthesis; S-adenosyl-L-methionine biosynthesis; S-adenosyl-L-methionine from L-methionine: step 1/1. Catalyzes the formation of S-adenosylmethionine (AdoMet) from methionine and ATP. The overall synthetic reaction is composed of two sequential steps, AdoMet formation and the subsequent tripolyphosphate hydrolysis which occurs prior to release of AdoMet from the enzyme. The polypeptide is S-adenosylmethionine synthase (Bacillus thuringiensis (strain Al Hakam)).